Here is a 614-residue protein sequence, read N- to C-terminus: Serine/threonine-protein kinase Pkn1 (614 aa).

In terms of domain architecture, Protein kinase spans 13-276 (YKVIAELGHG…TSGEQLQVTL (264 aa)). ATP-binding positions include 19-27 (LGHGLWSRD) and Lys-42.

It belongs to the protein kinase superfamily. Ser/Thr protein kinase family. In terms of assembly, interacts with PknD, interacts with and phosphorylates IncG. In terms of processing, autophosphorylates on serine and threonine residues. Present in elementary bodies 40 hours post-infection as 2 proteins of approximately 70 and 65 kDa; the smaller one may be due to differential phosphorylation or degradation.

It catalyses the reaction L-seryl-[protein] + ATP = O-phospho-L-seryl-[protein] + ADP + H(+). The enzyme catalyses L-threonyl-[protein] + ATP = O-phospho-L-threonyl-[protein] + ADP + H(+). Together with the serine/threonine kinase PknD, may play a role in specific interactions with host proteins during host intracellular growth. Autophosphorylates and phosphorylates IncG, an inclusion-membrane protein required for the modification of the nascent chlamydial inclusion. This Chlamydia trachomatis serovar L2 (strain ATCC VR-902B / DSM 19102 / 434/Bu) protein is Serine/threonine-protein kinase Pkn1 (pkn1).